The primary structure comprises 1252 residues: Guanine nucleotide exchange factor SDC25 (1252 aa).

One can recognise an SH3 domain in the interval 26-97 (QPIDVVECTY…PPSFTRSILN (72 aa)). Disordered stretches follow at residues 409 to 454 (IPAS…DTIW) and 623 to 648 (LNLD…DEYE). A compositionally biased stretch (low complexity) spans 416–428 (TSCSSETSHHSPS). Positions 782-914 (SNNRIKGGSK…LLKEVNQKFK (133 aa)) constitute an N-terminal Ras-GEF domain. The 248-residue stretch at 952 to 1199 (DPVLFATQLT…YQLSLIIEPK (248 aa)) folds into the Ras-GEF domain. Positions 1201 to 1252 (RKKVVPNSNSNNKSQEKSRDDQTDEGKTSTKKDRFSKFQLHKTKKKAPKVSK) are disordered. Residues 1214–1236 (SQEKSRDDQTDEGKTSTKKDRFS) show a composition bias toward basic and acidic residues. The segment covering 1239–1252 (QLHKTKKKAPKVSK) has biased composition (basic residues).

Its function is as follows. Promotes the exchange of Ras-bound GDP by GTP. This Saccharomyces cerevisiae (strain RM11-1a) (Baker's yeast) protein is Guanine nucleotide exchange factor SDC25 (SDC25).